Here is a 298-residue protein sequence, read N- to C-terminus: Glycine--tRNA ligase alpha subunit (298 aa).

The protein belongs to the class-II aminoacyl-tRNA synthetase family. Tetramer of two alpha and two beta subunits.

Its subcellular location is the cytoplasm. It catalyses the reaction tRNA(Gly) + glycine + ATP = glycyl-tRNA(Gly) + AMP + diphosphate. The chain is Glycine--tRNA ligase alpha subunit from Helicobacter pylori (strain HPAG1).